The chain runs to 24 residues: Heat shock 70 kDa protein 4L (24 aa).

Thr19 is modified (phosphothreonine).

It belongs to the heat shock protein 70 family. As to quaternary structure, homodimer. In the testis, forms a complex with p53 at 32.5 degrees Celsius which is scrotal temperature but not at 37 or 42 degrees Celsius. Expressed at high levels in testis and at much lower levels in brain. In testis, expressed mainly in germ cells. Widespread in brain with highest expression in cerebellum and medulla oblongata. Also expressed in renal medulla of water-restricted animals.

It is found in the cytoplasm. Its subcellular location is the nucleus. Possesses chaperone activity in vitro where it inhibits aggregation of citrate synthase. The sequence is that of Heat shock 70 kDa protein 4L (Hspa4l) from Rattus norvegicus (Rat).